Consider the following 330-residue polypeptide: MEYYHHSINKMAMFMVILVLAIDVTMVLGQGTRVGFYSSTCPRAESIVQSTVRAHFQSDPTVAPGILRMHFHDCFVLGCDGSILIEGSDAERTAIPNRNLKGFDVIEDAKTQIEAICPGVVSCADILALAARDSVVATRGLTWSVPTGRRDGRVSRAADAGDLPAFFDSVDIQKRKFLTKGLNTQDLVALTGAHTIGTAGCAVIRDRLFNFNSTGGPDPSIDATFLPQLRALCPQNGDASRRVGLDTGSVNNFDTSYFSNLRNGRGVLESDQKLWTDASTQVFVQRFLGIRGLLGLTFGVEFGRSMVKMSNIEVKTGTNGEIRKVCSAIN.

A signal peptide spans 1 to 29 (MEYYHHSINKMAMFMVILVLAIDVTMVLG). The residue at position 30 (Gln-30) is a Pyrrolidone carboxylic acid. 4 disulfides stabilise this stretch: Cys-41–Cys-117, Cys-74–Cys-79, Cys-123–Cys-326, and Cys-201–Cys-233. Catalysis depends on His-72, which acts as the Proton acceptor. Ca(2+)-binding residues include Asp-73, Val-76, Gly-78, Asp-80, and Ser-82. Pro-164 is a substrate binding site. Residue His-194 coordinates heme b. Thr-195 serves as a coordination point for Ca(2+). N-linked (GlcNAc...) asparagine glycosylation occurs at Asn-212. Residues Asp-246 and Asp-254 each contribute to the Ca(2+) site.

This sequence belongs to the peroxidase family. Classical plant (class III) peroxidase subfamily. Ca(2+) is required as a cofactor. It depends on heme b as a cofactor. In terms of tissue distribution, expressed at a high level in roots and at a trace level in lower leaves. Not expressed in upper leaves, stems, flowers, seeds and shoot apices.

The protein resides in the secreted. The catalysed reaction is 2 a phenolic donor + H2O2 = 2 a phenolic radical donor + 2 H2O. Removal of H(2)O(2), oxidation of toxic reductants, biosynthesis and degradation of lignin, suberization, auxin catabolism, response to environmental stresses such as wounding, pathogen attack and oxidative stress. These functions might be dependent on each isozyme/isoform in each plant tissue. Can use NADH, NADPH and monolignols as substrates. This Nicotiana tabacum (Common tobacco) protein is Peroxidase N1.